The primary structure comprises 325 residues: Succinylglutamate desuccinylase (325 aa).

Residues H51, E54, and H148 each contribute to the Zn(2+) site. The active site involves E211.

It belongs to the AspA/AstE family. Succinylglutamate desuccinylase subfamily. The cofactor is Zn(2+).

The enzyme catalyses N-succinyl-L-glutamate + H2O = L-glutamate + succinate. The protein operates within amino-acid degradation; L-arginine degradation via AST pathway; L-glutamate and succinate from L-arginine: step 5/5. Functionally, transforms N(2)-succinylglutamate into succinate and glutamate. In Photorhabdus laumondii subsp. laumondii (strain DSM 15139 / CIP 105565 / TT01) (Photorhabdus luminescens subsp. laumondii), this protein is Succinylglutamate desuccinylase.